Reading from the N-terminus, the 26-residue chain is Maculatin-3.1 (26 aa).

Alanine amide is present on A26.

Expressed by the skin dorsal glands.

The protein localises to the secreted. Its function is as follows. Shows antibacterial activity against S.uberis. This chain is Maculatin-3.1, found in Ranoidea genimaculata (Brown-spotted tree frog).